We begin with the raw amino-acid sequence, 327 residues long: Tagatose 1,6-diphosphate aldolase 2 (327 aa).

This sequence belongs to the aldolase LacD family.

It carries out the reaction D-tagatofuranose 1,6-bisphosphate = D-glyceraldehyde 3-phosphate + dihydroxyacetone phosphate. It functions in the pathway carbohydrate metabolism; D-tagatose 6-phosphate degradation; D-glyceraldehyde 3-phosphate and glycerone phosphate from D-tagatose 6-phosphate: step 2/2. The sequence is that of Tagatose 1,6-diphosphate aldolase 2 (lacD2) from Streptococcus pyogenes serotype M1.